The sequence spans 257 residues: MVIINTAAYHFVSITQPQTLADQIRAHGEIAGLKGTVLIANEGINLFLAGEKEAINAFYAWLCADVRFAALHVKYSVSAYKPFARFKVKVRPEIISFRRGDISPLQGRAPGVSAHTLRDWLRRGCDDNGRRLVMLDARNQQEIAYGTFSGAMTLPITKFTGFPGALAHYRDLLSDATVVSFCTGGIRCEKAVLWMRVDGMDNVLQLEGGILGYFEQVGGEGYDGRCFVFDKRVALDPQLRPLNDMRVVASFARSEIS.

Residues 128–222 enclose the Rhodanese domain; the sequence is NGRRLVMLDA…YFEQVGGEGY (95 aa). C182 serves as the catalytic Cysteine persulfide intermediate.

It belongs to the TrhO family.

The catalysed reaction is uridine(34) in tRNA + AH2 + O2 = 5-hydroxyuridine(34) in tRNA + A + H2O. In terms of biological role, catalyzes oxygen-dependent 5-hydroxyuridine (ho5U) modification at position 34 in tRNAs. This is tRNA uridine(34) hydroxylase from Xylella fastidiosa (strain 9a5c).